We begin with the raw amino-acid sequence, 454 residues long: tRNA modification GTPase MnmE (454 aa).

Arg-23, Glu-80, and Lys-120 together coordinate (6S)-5-formyl-5,6,7,8-tetrahydrofolate. Residues 216–377 (GMKVVIAGRP…LRNHLKQSMG (162 aa)) form the TrmE-type G domain. Asn-226 lines the K(+) pocket. GTP contacts are provided by residues 226 to 231 (NAGKSS), 245 to 251 (TDIAGTT), 270 to 273 (DTAG), 335 to 338 (NKAD), and 358 to 360 (SAR). A Mg(2+)-binding site is contributed by Ser-230. K(+)-binding residues include Thr-245, Ile-247, and Thr-250. Residue Thr-251 coordinates Mg(2+). Lys-454 contributes to the (6S)-5-formyl-5,6,7,8-tetrahydrofolate binding site.

This sequence belongs to the TRAFAC class TrmE-Era-EngA-EngB-Septin-like GTPase superfamily. TrmE GTPase family. Homodimer. Heterotetramer of two MnmE and two MnmG subunits. The cofactor is K(+).

It localises to the cytoplasm. In terms of biological role, exhibits a very high intrinsic GTPase hydrolysis rate. Involved in the addition of a carboxymethylaminomethyl (cmnm) group at the wobble position (U34) of certain tRNAs, forming tRNA-cmnm(5)s(2)U34. In Salmonella paratyphi C (strain RKS4594), this protein is tRNA modification GTPase MnmE.